The following is a 159-amino-acid chain: Cytochrome c nitrite reductase subunit NrfH (159 aa).

Residues 2–14 lie on the Cytoplasmic side of the membrane; sequence SEEKSRNGPARLK. A helical; Signal-anchor for type II membrane protein transmembrane segment spans residues 15-33; sequence LVLGGATLGVVALATVAFG. Residues 34-159 are Periplasmic-facing; that stretch reads MKYTDQRPFC…PISTREVADE (126 aa). Positions 43, 46, 49, 61, and 66 each coordinate heme. An a menaquinol-binding site is contributed by asparagine 67. Heme-binding residues include cysteine 69 and histidine 70. A menaquinol contacts are provided by lysine 82 and aspartate 89. Aspartate 89 contacts heme. Residues 99-100 form an interaction with NrfA region; the sequence is GD. Positions 116, 119, 120, 136, 139, 140, and 145 each coordinate heme. Residues 123-158 are interaction with NrfA; sequence TNVEVASMEAKKYCTDCHRNVQHMRMKPISTREVAD.

The protein belongs to the NapC/NirT/NrfH family. In terms of assembly, component of the NrfHA cytochrome c nitrite reductase complex composed of 4 NrfA catalytic subunits and 2 NrfH quinone-binding subunits. Interacts with NrfA homodimer. The cofactor is heme.

The protein resides in the cell inner membrane. Its function is as follows. Electron donor subunit of the cytochrome c nitrite reductase holocomplex NrfHA. Acquires electrons from the menaquinone pool and mediates their transfer to the catalytic subunit NrfA in an anaerobic respiratory process of nitrite. The other biological function of the NrfHA holocomplex is to detoxify nitrite. This function is essential for the survival of this organism as it enables it to overcome inhibition by nitrite, which is produced by other organisms living in the same environment. This Nitratidesulfovibrio vulgaris (strain ATCC 29579 / DSM 644 / CCUG 34227 / NCIMB 8303 / VKM B-1760 / Hildenborough) (Desulfovibrio vulgaris) protein is Cytochrome c nitrite reductase subunit NrfH.